Here is a 569-residue protein sequence, read N- to C-terminus: 2-succinyl-5-enolpyruvyl-6-hydroxy-3-cyclohexene-1-carboxylate synthase (569 aa).

The protein belongs to the TPP enzyme family. MenD subfamily. In terms of assembly, homodimer. The cofactor is Mg(2+). Mn(2+) serves as cofactor. Requires thiamine diphosphate as cofactor.

It catalyses the reaction isochorismate + 2-oxoglutarate + H(+) = 5-enolpyruvoyl-6-hydroxy-2-succinyl-cyclohex-3-ene-1-carboxylate + CO2. The protein operates within quinol/quinone metabolism; 1,4-dihydroxy-2-naphthoate biosynthesis; 1,4-dihydroxy-2-naphthoate from chorismate: step 2/7. It functions in the pathway quinol/quinone metabolism; menaquinone biosynthesis. In terms of biological role, catalyzes the thiamine diphosphate-dependent decarboxylation of 2-oxoglutarate and the subsequent addition of the resulting succinic semialdehyde-thiamine pyrophosphate anion to isochorismate to yield 2-succinyl-5-enolpyruvyl-6-hydroxy-3-cyclohexene-1-carboxylate (SEPHCHC). The chain is 2-succinyl-5-enolpyruvyl-6-hydroxy-3-cyclohexene-1-carboxylate synthase from Haemophilus ducreyi (strain 35000HP / ATCC 700724).